A 444-amino-acid polypeptide reads, in one-letter code: Probable glycine dehydrogenase (decarboxylating) subunit 1 (444 aa).

The protein belongs to the GcvP family. N-terminal subunit subfamily. As to quaternary structure, the glycine cleavage system is composed of four proteins: P, T, L and H. In this organism, the P 'protein' is a heterodimer of two subunits.

It catalyses the reaction N(6)-[(R)-lipoyl]-L-lysyl-[glycine-cleavage complex H protein] + glycine + H(+) = N(6)-[(R)-S(8)-aminomethyldihydrolipoyl]-L-lysyl-[glycine-cleavage complex H protein] + CO2. Its function is as follows. The glycine cleavage system catalyzes the degradation of glycine. The P protein binds the alpha-amino group of glycine through its pyridoxal phosphate cofactor; CO(2) is released and the remaining methylamine moiety is then transferred to the lipoamide cofactor of the H protein. The protein is Probable glycine dehydrogenase (decarboxylating) subunit 1 of Prosthecochloris aestuarii (strain DSM 271 / SK 413).